Consider the following 439-residue polypeptide: Glutamyl-tRNA reductase (439 aa).

Substrate-binding positions include 46-49, Ser-111, 116-118, and Gln-122; these read TCNR and EGE. The Nucleophile role is filled by Cys-47. Residue 191–196 coordinates NADP(+); that stretch reads GTGAYA.

Belongs to the glutamyl-tRNA reductase family. In terms of assembly, homodimer.

The catalysed reaction is (S)-4-amino-5-oxopentanoate + tRNA(Glu) + NADP(+) = L-glutamyl-tRNA(Glu) + NADPH + H(+). It participates in porphyrin-containing compound metabolism; protoporphyrin-IX biosynthesis; 5-aminolevulinate from L-glutamyl-tRNA(Glu): step 1/2. Catalyzes the NADPH-dependent reduction of glutamyl-tRNA(Glu) to glutamate 1-semialdehyde (GSA). The protein is Glutamyl-tRNA reductase of Clavibacter michiganensis subsp. michiganensis (strain NCPPB 382).